A 1980-amino-acid polypeptide reads, in one-letter code: Sodium channel protein type 8 subunit alpha (1980 aa).

2 disordered regions span residues 1 to 20 (MAAR…FTPE) and 28 to 62 (RIAE…LEAG). The Cytoplasmic portion of the chain corresponds to 1-132 (MAARLLAPPG…RIAIKILIHS (132 aa)). Basic and acidic residues predominate over residues 28–61 (RIAESKLKKPPKADGSHREDDEDSKPKPNSDLEA). The stretch at 114–442 (ILSPFNLIRR…KAMLEQLKKQ (329 aa)) is one I repeat. Residues 133-151 (VFSMIIMCTILTNCVFMTF) traverse the membrane as a helical segment. At 152–158 (SNPPDWS) the chain is on the extracellular side. Residues 159–179 (KNVEYTFTGIYTFESLVKIIA) form a helical membrane-spanning segment. The Cytoplasmic portion of the chain corresponds to 180 to 193 (RGFCIDGFTFLRDP). Residues 194–211 (WNWLDFSVIMMAYITEFV) form a helical membrane-spanning segment. At 212–217 (NLGNVS) the chain is on the extracellular side. The N-linked (GlcNAc...) asparagine glycan is linked to N215. Residues 218-234 (ALRTFRVLRALKTISVI) form a helical membrane-spanning segment. Residues 235 to 253 (PGLKTIVGALIQSVKKLSD) are Cytoplasmic-facing. Residues 254–273 (VMILTVFCLSVFALIGLQLF) traverse the membrane as a helical segment. The Extracellular portion of the chain corresponds to 274-355 (MGNLRNKCVV…PNYGYTSFDT (82 aa)). C281 and C333 are disulfide-bonded. N-linked (GlcNAc...) asparagine glycans are attached at residues N289, N295, and N308. N326 carries an N-linked (GlcNAc...) (high mannose) asparagine glycan. Positions 356–380 (FSWAFLALFRLMTQDYWENLYQLTL) form an intramembrane region, pore-forming. Na(+) is bound at residue E373. At 381–387 (RAAGKTY) the chain is on the extracellular side. A helical transmembrane segment spans residues 388 to 408 (MIFFVLVIFVGSFYLVNLILA). The Cytoplasmic segment spans residues 409–753 (VVAMAYEEQN…EIVNLIVMDP (345 aa)). Disordered stretches follow at residues 446-530 (AQAA…KAFR) and 568-602 (FRGP…DSLF). A compositionally biased stretch (low complexity) spans 474 to 486 (PRSSSEISKLSSK). Residues 489-500 (KERRNRRKKRKQ) show a composition bias toward basic residues. Composition is skewed to basic and acidic residues over residues 501 to 530 (KELS…KAFR) and 586 to 602 (DEHS…DSLF). Phosphoserine occurs at positions 518 and 520. One copy of the II repeat lies at 735-1007 (CHPYWIKLKE…QISVIRIKKG (273 aa)). Residues 754–772 (FVDLAITICIVLNTLFMAM) traverse the membrane as a helical segment. Residues 773 to 783 (EHHPMTPQFEH) lie on the Extracellular side of the membrane. Residues 784 to 803 (VLAVGNLVFTGIFTAEMFLK) form a helical membrane-spanning segment. Residues 804–817 (LIAMDPYYYFQEGW) lie on the Cytoplasmic side of the membrane. The chain crosses the membrane as a helical span at residues 818 to 837 (NIFDGFIVSLSLMELSLADV). The Extracellular portion of the chain corresponds to 838–839 (EG). The chain crosses the membrane as a helical span at residues 840 to 857 (LSVLRSFRLLRVFKLAKS). Residues 858–873 (WPTLNMLIKIIGNSVG) are Cytoplasmic-facing. The helical transmembrane segment at 874 to 892 (ALGNLTLVLAIIVFIFAVV) threads the bilayer. Topologically, residues 893–921 (GMQLFGKSYKECVCKINQDCELPRWHMHD) are extracellular. C906 and C912 are disulfide-bonded. The segment at residues 922 to 942 (FFHSFLIVFRVLCGEWIETMW) is an intramembrane region (pore-forming). Residues E936 and E939 each contribute to the Na(+) site. The Extracellular segment spans residues 943-955 (DCMEVAGQAMCLI). The cysteines at positions 944 and 953 are disulfide-linked. A helical transmembrane segment spans residues 956–976 (VFMMVMVIGNLVVLNLFLALL). The Cytoplasmic portion of the chain corresponds to 977–1199 (LSSFSADNLA…TCFLIVEHNW (223 aa)). The disordered stretch occupies residues 1107–1148 (NLNTEDVSSESDPEGSKDKLDDTSSSEGSTIDIKPEVEEVPV). The III repeat unit spans residues 1180 to 1495 (LGKSWWILRK…KKYYNAMKKL (316 aa)). The helical transmembrane segment at 1200–1217 (FETFIIFMILLSSGALAF) threads the bilayer. Residues 1218–1230 (EDIYIEQRKTIRT) lie on the Extracellular side of the membrane. The chain crosses the membrane as a helical span at residues 1231-1249 (ILEYADKVFTYIFILEMLL). The Cytoplasmic portion of the chain corresponds to 1250-1263 (KWTAYGFVKFFTNA). A helical transmembrane segment spans residues 1264-1282 (WCWLDFLIVAVSLVSLIAN). At 1283-1290 (ALGYSELG) the chain is on the extracellular side. A helical transmembrane segment spans residues 1291–1309 (AIKSLRTLRALRPLRALSR). The Cytoplasmic portion of the chain corresponds to 1310 to 1326 (FEGMRVVVNALVGAIPS). The chain crosses the membrane as a helical span at residues 1327 to 1346 (IMNVLLVCLIFWLIFSIMGV). Over 1347-1399 (NLFAGKYHYCFNETSEIRFEIEDVNNKTECEKLMEGNNTEIRWKNVKINFDNV) the chain is Extracellular. The cysteines at positions 1356 and 1376 are disulfide-linked. 3 N-linked (GlcNAc...) asparagine glycosylation sites follow: N1358, N1372, and N1383. Residues 1400-1421 (GAGYLALLQVATFKGWMDIMYA) constitute an intramembrane region (pore-forming). The Extracellular segment spans residues 1422 to 1438 (AVDSRKPDEQPKYEDNI). The chain crosses the membrane as a helical span at residues 1439-1460 (YMYIYFVIFIIFGSFFTLNLFI). Topologically, residues 1461-1523 (GVIIDNFNQQ…IVFDFVTQQA (63 aa)) are cytoplasmic. S1497 bears the Phosphoserine; by PKC mark. The IV repeat unit spans residues 1504-1801 (IPRPLNKIQG…WEKFDPDATQ (298 aa)). A helical membrane pass occupies residues 1524–1541 (FDIVIMMLICLNMVTMMV). The Extracellular portion of the chain corresponds to 1542-1552 (ETDTQSKQMEN). A helical transmembrane segment spans residues 1553–1571 (ILYWINLVFVIFFTCECVL). Residues 1572 to 1583 (KMFALRHYYFTI) lie on the Cytoplasmic side of the membrane. Residues 1584–1601 (GWNIFDFVVVILSIVGMF) form a helical membrane-spanning segment. Residues 1602–1614 (LADIIEKYFVSPT) are Extracellular-facing. A helical membrane pass occupies residues 1615 to 1631 (LFRVIRLARIGRILRLI). Residues 1632 to 1650 (KGAKGIRTLLFALMMSLPA) lie on the Cytoplasmic side of the membrane. A helical transmembrane segment spans residues 1651-1668 (LFNIGLLLFLVMFIFSIF). At 1669-1690 (GMSNFAYVKHEAGIDDMFNFET) the chain is on the extracellular side. Residues 1691–1713 (FGNSMICLFQITTSAGWDGLLLP) constitute an intramembrane region (pore-forming). The Extracellular segment spans residues 1714–1742 (ILNRPPDCSLDKEHPGSGFKGDCGNPSVG). A disulfide bridge connects residues C1721 and C1736. Residues 1743–1765 (IFFFVSYIIISFLIVVNMYIAII) traverse the membrane as a helical segment. The Cytoplasmic segment spans residues 1766–1980 (LENFSVATEE…RQKEVRESKC (215 aa)). The region spanning 1895–1924 (EEVSAVVLQRAYRGHLARRGFICKKTTSNK) is the IQ domain. A disordered region spans residues 1922–1980 (SNKLENGGTHREKKESTPSTASLPSYDSVTKPEKEKQQRAEEGRRERAKRQKEVRESKC). Positions 1938–1949 (TPSTASLPSYDS) are enriched in polar residues. Residues 1951–1980 (TKPEKEKQQRAEEGRRERAKRQKEVRESKC) are compositionally biased toward basic and acidic residues.

It belongs to the sodium channel (TC 1.A.1.10) family. Nav1.6/SCN8A subfamily. The voltage-sensitive sodium channel consists of an ion-conducting pore-forming alpha subunit regulated by one or more beta-1 (SCN1B), beta-2 (SCN2B), beta-3 (SCN3B) and/or beta-4 (SCN4B) subunits. Beta-1 (SCN1B) and beta-3 (SCN3B) are non-covalently associated with alpha, while beta-2 (SCN2B) and beta-4 (SCN4B) are covalently linked by disulfide bonds. Interacts with NEDD4 and NEDD4L. Interacts with FGF13. Interacts with FGF14, GBG3, GBB2 and SCN1B. Interacts with TMEM233. Interacts with the conotoxin GVIIJ. Interacts with the spider beta/delta-theraphotoxin-Pre1a. Interacts with CALM1; the interaction modulates the inactivation rate of SCN8A. May be ubiquitinated by NEDD4L; which would promote its endocytosis. In terms of processing, phosphorylation at Ser-1497 by PKC in a highly conserved cytoplasmic loop slows inactivation of the sodium channel and reduces peak sodium currents. As to expression, expressed in the hippocampus with increased expression in epileptic tissue compared to normal adjacent tissue (at protein level). Expressed in non-neuronal tissues, such as monocytes/macrophages.

The protein resides in the cell membrane. Its subcellular location is the cell projection. It is found in the axon. It localises to the cytoplasmic vesicle. The protein localises to the podosome. It carries out the reaction Na(+)(in) = Na(+)(out). Inhibited by tetrodotoxin and, more weakly, by its metabolite 4,9-ah-tetrodotoxin. Its function is as follows. Pore-forming subunit of a voltage-gated sodium channel complex assuming opened or closed conformations in response to the voltage difference across membranes and through which sodium ions selectively pass along their electrochemical gradient. Contributes to neuronal excitability by regulating action potential threshold and propagation. In terms of biological role, more specifically expressed in non-neuronal cells, could play a role in sodium release from intracellular compartments and participate in the control of podosomes formation and macrophages adhesion and movement. The polypeptide is Sodium channel protein type 8 subunit alpha (Homo sapiens (Human)).